The primary structure comprises 428 residues: Enolase (428 aa).

Q164 is a binding site for (2R)-2-phosphoglycerate. Catalysis depends on E208, which acts as the Proton donor. Positions 245, 286, and 313 each coordinate Mg(2+). Residues K338, R367, S368, and K389 each contribute to the (2R)-2-phosphoglycerate site. The Proton acceptor role is filled by K338.

The protein belongs to the enolase family. Mg(2+) serves as cofactor.

Its subcellular location is the cytoplasm. The protein localises to the secreted. The protein resides in the cell surface. It carries out the reaction (2R)-2-phosphoglycerate = phosphoenolpyruvate + H2O. Its pathway is carbohydrate degradation; glycolysis; pyruvate from D-glyceraldehyde 3-phosphate: step 4/5. Catalyzes the reversible conversion of 2-phosphoglycerate (2-PG) into phosphoenolpyruvate (PEP). It is essential for the degradation of carbohydrates via glycolysis. The sequence is that of Enolase from Pyrococcus horikoshii (strain ATCC 700860 / DSM 12428 / JCM 9974 / NBRC 100139 / OT-3).